The primary structure comprises 50 residues: Small ribosomal subunit protein uS14 (50 aa).

C15, C18, C33, and C36 together coordinate Zn(2+).

Belongs to the universal ribosomal protein uS14 family. Zinc-binding uS14 subfamily. In terms of assembly, part of the 30S ribosomal subunit. Requires Zn(2+) as cofactor.

Its function is as follows. Binds 16S rRNA, required for the assembly of 30S particles. This is Small ribosomal subunit protein uS14 from Methanococcoides burtonii (strain DSM 6242 / NBRC 107633 / OCM 468 / ACE-M).